The following is a 57-amino-acid chain: Potassium channel toxin alpha-KTx 8.8 (57 aa).

The signal sequence occupies residues 1–19 (MCRLYAIILIVLVMNVIMT). A propeptide spanning residues 20–28 (IIPDSKVEV) is cleaved from the precursor. 3 disulfide bridges follow: Cys31–Cys47, Cys34–Cys52, and Cys38–Cys54.

It belongs to the short scorpion toxin superfamily. Potassium channel inhibitor family. Alpha-KTx 08 subfamily. Post-translationally, contains 3 disulfide bonds. In terms of tissue distribution, expressed by the venom gland.

The protein resides in the secreted. In terms of biological role, selectively inhibits voltage-gated potassium channels rKv1.2/KCNA2 (IC(50)=331 nM) and hKv1.3/KCNA3 (IC(50)=503 nM). Partially inihibts rKv1.6/KCNA6 (IC(50)=9983 nM). The chain is Potassium channel toxin alpha-KTx 8.8 from Orthochirus scrobiculosus (Central Asian scorpion).